The sequence spans 345 residues: Probable deoxyhypusine synthase 2 (345 aa).

Lysine 292 serves as the catalytic Nucleophile.

It belongs to the deoxyhypusine synthase family. NAD(+) serves as cofactor.

The catalysed reaction is [eIF5A protein]-L-lysine + spermidine = [eIF5A protein]-deoxyhypusine + propane-1,3-diamine. It functions in the pathway protein modification; eIF5A hypusination. Functionally, catalyzes the NAD-dependent oxidative cleavage of spermidine and the subsequent transfer of the butylamine moiety of spermidine to the epsilon-amino group of a specific lysine residue of the eIF-5A precursor protein to form the intermediate deoxyhypusine residue. The sequence is that of Probable deoxyhypusine synthase 2 (dys2) from Methanosarcina acetivorans (strain ATCC 35395 / DSM 2834 / JCM 12185 / C2A).